The following is a 158-amino-acid chain: Small ribosomal subunit protein uS17 (158 aa).

Alanine 2 bears the N-acetylalanine mark. Arginine 22 carries the post-translational modification Citrulline. N6-acetyllysine is present on residues lysine 38, lysine 45, and lysine 58. Residue cysteine 60 is the site of S-palmitoyl cysteine attachment. Serine 67 carries the post-translational modification Phosphoserine. Arginine 69 carries the omega-N-methylarginine modification. At serine 110 the chain carries Phosphoserine.

This sequence belongs to the universal ribosomal protein uS17 family. In terms of assembly, component of the small ribosomal subunit. Part of the small subunit (SSU) processome, composed of more than 70 proteins and the RNA chaperone small nucleolar RNA (snoRNA) U3. In terms of processing, citrullinated by PADI4.

The protein resides in the cytoplasm. It is found in the nucleus. It localises to the nucleolus. Functionally, component of the small ribosomal subunit. The ribosome is a large ribonucleoprotein complex responsible for the synthesis of proteins in the cell. Part of the small subunit (SSU) processome, first precursor of the small eukaryotic ribosomal subunit. During the assembly of the SSU processome in the nucleolus, many ribosome biogenesis factors, an RNA chaperone and ribosomal proteins associate with the nascent pre-rRNA and work in concert to generate RNA folding, modifications, rearrangements and cleavage as well as targeted degradation of pre-ribosomal RNA by the RNA exosome. In Canis lupus familiaris (Dog), this protein is Small ribosomal subunit protein uS17 (RPS11).